The sequence spans 327 residues: AA9 family lytic polysaccharide monooxygenase G (327 aa).

The signal sequence occupies residues 1 to 20 (MKLNLASLCFLASIAPLVSG). Residues histidine 21 and histidine 96 each contribute to the Cu(2+) site. Cysteine 62 and cysteine 185 are joined by a disulfide. An O2-binding site is contributed by histidine 172. Tyrosine 182 lines the Cu(2+) pocket. N-linked (GlcNAc...) asparagine glycosylation is present at asparagine 290. Residues 291–327 (GTIKKYYQCGGQGWTGSGSCEAGTSCREWNTWYFQCV) enclose the CBM1 domain.

Belongs to the polysaccharide monooxygenase AA9 family. Cu(2+) serves as cofactor.

It localises to the secreted. It carries out the reaction [(1-&gt;4)-beta-D-glucosyl]n+m + reduced acceptor + O2 = 4-dehydro-beta-D-glucosyl-[(1-&gt;4)-beta-D-glucosyl]n-1 + [(1-&gt;4)-beta-D-glucosyl]m + acceptor + H2O.. Lytic polysaccharide monooxygenase (LPMO) that depolymerizes crystalline and amorphous polysaccharides via the oxidation of scissile alpha- or beta-(1-4)-glycosidic bonds, yielding C1 or C4 oxidation products. Catalysis by LPMOs requires the reduction of the active-site copper from Cu(II) to Cu(I) by a reducing agent and H(2)O(2) or O(2) as a cosubstrate. The sequence is that of AA9 family lytic polysaccharide monooxygenase G from Aspergillus tamarii.